A 67-amino-acid polypeptide reads, in one-letter code: uncharacterized protein (67 aa).

The next 2 membrane-spanning stretches (helical) occupy residues 10–30 (EFFI…ITMW) and 40–60 (LMVG…WMVF).

Belongs to the plectrovirus ORF10 family.

It is found in the host membrane. This is an uncharacterized protein from Spiroplasma citri (SpV1).